A 348-amino-acid chain; its full sequence is Neuronal growth regulator 1 (348 aa).

The signal sequence occupies residues M1–S31. Ig-like C2-type domains follow at residues V32–T128, P133–V215, and P219–N307. C54 and C112 are joined by a disulfide. 2 N-linked (GlcNAc...) asparagine glycosylation sites follow: N67 and N149. Disulfide bonds link C154–C197 and C239–C291. At Y181 the chain carries Phosphotyrosine. 4 N-linked (GlcNAc...) asparagine glycosylation sites follow: N269, N280, N288, and N301. G318 is lipidated: GPI-anchor amidated glycine. A propeptide spans S319–Q348 (removed in mature form).

The protein belongs to the immunoglobulin superfamily. IgLON family. Post-translationally, glycosylated. As to expression, highly expressed in brain.

It localises to the cell membrane. Its function is as follows. May be involved in cell-adhesion. May function as a trans-neural growth-promoting factor in regenerative axon sprouting in the mammalian brain. This chain is Neuronal growth regulator 1 (Negr1), found in Rattus norvegicus (Rat).